The sequence spans 357 residues: 3-dehydroquinate synthase (357 aa).

NAD(+) contacts are provided by residues 104-108, 128-129, K141, and 168-171; these read GVVGD, TT, and FLET. The Zn(2+) site is built by E183, H243, and H260.

This sequence belongs to the sugar phosphate cyclases superfamily. Dehydroquinate synthase family. Requires NAD(+) as cofactor. Co(2+) is required as a cofactor. It depends on Zn(2+) as a cofactor.

The protein localises to the cytoplasm. It carries out the reaction 7-phospho-2-dehydro-3-deoxy-D-arabino-heptonate = 3-dehydroquinate + phosphate. Its pathway is metabolic intermediate biosynthesis; chorismate biosynthesis; chorismate from D-erythrose 4-phosphate and phosphoenolpyruvate: step 2/7. Its function is as follows. Catalyzes the conversion of 3-deoxy-D-arabino-heptulosonate 7-phosphate (DAHP) to dehydroquinate (DHQ). In Streptococcus pyogenes serotype M3 (strain ATCC BAA-595 / MGAS315), this protein is 3-dehydroquinate synthase.